Here is a 144-residue protein sequence, read N- to C-terminus: Large ribosomal subunit protein uL14 (144 aa).

A disordered region spans residues 107 to 144 (NEGYTHSQHSNQREGGERIQAQPSPPHARRAVKTSFCR).

The protein belongs to the universal ribosomal protein uL14 family. Part of the 50S ribosomal subunit. Forms a cluster with proteins L3 and L19. In the 70S ribosome, L14 and L19 interact and together make contacts with the 16S rRNA in bridges B5 and B8.

Its function is as follows. Binds to 23S rRNA. Forms part of two intersubunit bridges in the 70S ribosome. The protein is Large ribosomal subunit protein uL14 of Xanthobacter autotrophicus (strain ATCC BAA-1158 / Py2).